The following is a 131-amino-acid chain: Small ribosomal subunit protein uS8 (131 aa).

Belongs to the universal ribosomal protein uS8 family. As to quaternary structure, part of the 30S ribosomal subunit. Contacts proteins S5 and S12.

One of the primary rRNA binding proteins, it binds directly to 16S rRNA central domain where it helps coordinate assembly of the platform of the 30S subunit. The chain is Small ribosomal subunit protein uS8 from Chlorobium phaeobacteroides (strain DSM 266 / SMG 266 / 2430).